Consider the following 124-residue polypeptide: Large ribosomal subunit protein uL22c (124 aa).

It belongs to the universal ribosomal protein uL22 family. Part of the 50S ribosomal subunit.

It localises to the plastid. It is found in the chloroplast. Its function is as follows. This protein binds specifically to 23S rRNA. In terms of biological role, the globular domain of the protein is located near the polypeptide exit tunnel on the outside of the subunit, while an extended beta-hairpin is found that lines the wall of the exit tunnel in the center of the 70S ribosome. The polypeptide is Large ribosomal subunit protein uL22c (rpl22) (Amborella trichopoda).